The following is a 567-amino-acid chain: Proline--tRNA ligase (567 aa).

This sequence belongs to the class-II aminoacyl-tRNA synthetase family. ProS type 1 subfamily. In terms of assembly, homodimer.

Its subcellular location is the cytoplasm. The catalysed reaction is tRNA(Pro) + L-proline + ATP = L-prolyl-tRNA(Pro) + AMP + diphosphate. In terms of biological role, catalyzes the attachment of proline to tRNA(Pro) in a two-step reaction: proline is first activated by ATP to form Pro-AMP and then transferred to the acceptor end of tRNA(Pro). As ProRS can inadvertently accommodate and process non-cognate amino acids such as alanine and cysteine, to avoid such errors it has two additional distinct editing activities against alanine. One activity is designated as 'pretransfer' editing and involves the tRNA(Pro)-independent hydrolysis of activated Ala-AMP. The other activity is designated 'posttransfer' editing and involves deacylation of mischarged Ala-tRNA(Pro). The misacylated Cys-tRNA(Pro) is not edited by ProRS. The chain is Proline--tRNA ligase from Campylobacter fetus subsp. fetus (strain 82-40).